We begin with the raw amino-acid sequence, 335 residues long: Glyceraldehyde-3-phosphate dehydrogenase, cytosolic (335 aa).

NAD(+) is bound by residues 13–14 (RI), aspartate 35, and arginine 80. Residues 151 to 153 (SCT), threonine 182, 211 to 212 (TG), and arginine 234 each bind D-glyceraldehyde 3-phosphate. The Nucleophile role is filled by cysteine 152. Asparagine 316 lines the NAD(+) pocket.

It belongs to the glyceraldehyde-3-phosphate dehydrogenase family. As to quaternary structure, homotetramer.

It is found in the cytoplasm. It carries out the reaction D-glyceraldehyde 3-phosphate + phosphate + NAD(+) = (2R)-3-phospho-glyceroyl phosphate + NADH + H(+). The protein operates within carbohydrate degradation; glycolysis; pyruvate from D-glyceraldehyde 3-phosphate: step 1/5. In Gracilaria gracilis (Red alga), this protein is Glyceraldehyde-3-phosphate dehydrogenase, cytosolic (GAPC).